The sequence spans 294 residues: ATP phosphoribosyltransferase (294 aa).

This sequence belongs to the ATP phosphoribosyltransferase family. Long subfamily. The cofactor is Mg(2+).

The protein resides in the cytoplasm. The catalysed reaction is 1-(5-phospho-beta-D-ribosyl)-ATP + diphosphate = 5-phospho-alpha-D-ribose 1-diphosphate + ATP. It functions in the pathway amino-acid biosynthesis; L-histidine biosynthesis; L-histidine from 5-phospho-alpha-D-ribose 1-diphosphate: step 1/9. Its activity is regulated as follows. Feedback inhibited by histidine. In terms of biological role, catalyzes the condensation of ATP and 5-phosphoribose 1-diphosphate to form N'-(5'-phosphoribosyl)-ATP (PR-ATP). Has a crucial role in the pathway because the rate of histidine biosynthesis seems to be controlled primarily by regulation of HisG enzymatic activity. This Chlorobium phaeovibrioides (strain DSM 265 / 1930) (Prosthecochloris vibrioformis (strain DSM 265)) protein is ATP phosphoribosyltransferase.